The following is a 544-amino-acid chain: Chaperonin GroEL (544 aa).

ATP is bound by residues 29 to 32, lysine 50, 86 to 90, glycine 414, 477 to 479, and aspartate 493; these read TMGP, DGTTT, and NAV.

This sequence belongs to the chaperonin (HSP60) family. In terms of assembly, forms a cylinder of 14 subunits composed of two heptameric rings stacked back-to-back. Interacts with the co-chaperonin GroES.

The protein resides in the cytoplasm. The catalysed reaction is ATP + H2O + a folded polypeptide = ADP + phosphate + an unfolded polypeptide.. Its function is as follows. Together with its co-chaperonin GroES, plays an essential role in assisting protein folding. The GroEL-GroES system forms a nano-cage that allows encapsulation of the non-native substrate proteins and provides a physical environment optimized to promote and accelerate protein folding. This is Chaperonin GroEL from Campylobacter curvus (strain 525.92).